We begin with the raw amino-acid sequence, 469 residues long: Trigger factor (469 aa).

One can recognise a PPIase FKBP-type domain in the interval 166-245 (GDFLTIDITA…VKSVKERELP (80 aa)). A disordered region spans residues 430–469 (GGEEEAAEAEAAPAVDSDAVEGEAATEEAAPSDDPAAVKF).

It belongs to the FKBP-type PPIase family. Tig subfamily.

It is found in the cytoplasm. The catalysed reaction is [protein]-peptidylproline (omega=180) = [protein]-peptidylproline (omega=0). Involved in protein export. Acts as a chaperone by maintaining the newly synthesized protein in an open conformation. Functions as a peptidyl-prolyl cis-trans isomerase. This is Trigger factor from Arthrobacter sp. (strain FB24).